Reading from the N-terminus, the 123-residue chain is MENSLFKKSEKKVHRALRVRKVLRGSSLKPRLCVVKTNKHIYVQLIDDSIGKTLASVSTMAKSNKASGLIKKNQDVAKTLGTQIAEIGKSLQVDRVVFDRGPFKYHGIIAMVADGAREGGLQF.

The protein belongs to the universal ribosomal protein uL18 family. Part of the 50S ribosomal subunit; part of the 5S rRNA/L5/L18/L25 subcomplex. Contacts the 5S and 23S rRNAs.

Functionally, this is one of the proteins that bind and probably mediate the attachment of the 5S RNA into the large ribosomal subunit, where it forms part of the central protuberance. This chain is Large ribosomal subunit protein uL18, found in Chlamydia caviae (strain ATCC VR-813 / DSM 19441 / 03DC25 / GPIC) (Chlamydophila caviae).